A 232-amino-acid chain; its full sequence is Ubiquitin-conjugating enzyme E2-24 kDa (232 aa).

The span at 1–37 (MSSTPAAGSAAEVATSSATSNAPSAPSTTASNVSNTS) shows a compositional bias: low complexity. The tract at residues 1 to 87 (MSSTPAAGSA…PRISRALGTS (87 aa)) is disordered. A compositionally biased stretch (gly residues) spans 58–67 (GASGSNAGGG). Residues 86–232 (TSAKRIQKEL…ARLWTKRYAT (147 aa)) enclose the UBC core domain. Cys170 functions as the Glycyl thioester intermediate in the catalytic mechanism.

The protein belongs to the ubiquitin-conjugating enzyme family.

It catalyses the reaction S-ubiquitinyl-[E1 ubiquitin-activating enzyme]-L-cysteine + [E2 ubiquitin-conjugating enzyme]-L-cysteine = [E1 ubiquitin-activating enzyme]-L-cysteine + S-ubiquitinyl-[E2 ubiquitin-conjugating enzyme]-L-cysteine.. It functions in the pathway protein modification; protein ubiquitination. Catalyzes the covalent attachment of ubiquitin to other proteins. The sequence is that of Ubiquitin-conjugating enzyme E2-24 kDa from Drosophila melanogaster (Fruit fly).